Here is a 312-residue protein sequence, read N- to C-terminus: Pantothenate synthetase (312 aa).

42-49 is an ATP binding site; it reads MGALHTGH. The active-site Proton donor is histidine 49. Glutamine 73 contributes to the (R)-pantoate binding site. Position 73 (glutamine 73) interacts with beta-alanine. Residue 159 to 162 participates in ATP binding; sequence GEKD. Glutamine 165 is a (R)-pantoate binding site. ATP contacts are provided by residues valine 188 and 196–199; that span reads LSSR.

The protein belongs to the pantothenate synthetase family. As to quaternary structure, homodimer.

It localises to the cytoplasm. The enzyme catalyses (R)-pantoate + beta-alanine + ATP = (R)-pantothenate + AMP + diphosphate + H(+). It participates in cofactor biosynthesis; (R)-pantothenate biosynthesis; (R)-pantothenate from (R)-pantoate and beta-alanine: step 1/1. In terms of biological role, catalyzes the condensation of pantoate with beta-alanine in an ATP-dependent reaction via a pantoyl-adenylate intermediate. The protein is Pantothenate synthetase of Rhodococcus jostii (strain RHA1).